A 426-amino-acid polypeptide reads, in one-letter code: Ammonium transporter Rh type A (426 aa).

The Cytoplasmic portion of the chain corresponds to 1–4 (MRFK). The helical transmembrane segment at 5–25 (FPLMAIGLEVVMIVLFALFVQ) threads the bilayer. Topologically, residues 26 to 54 (YETSVNTSRNPNETESAAMDVEKTMESYP) are extracellular. N-linked (GlcNAc...) asparagine glycans are attached at residues asparagine 31 and asparagine 37. The chain crosses the membrane as a helical span at residues 55 to 75 (FFQDVHIMVFAGFGFLMTFLW). The Cytoplasmic segment spans residues 76–78 (KYG). A helical membrane pass occupies residues 79 to 99 (FSGVGINLLIAALGLQWGTII). Topologically, residues 100-124 (QGIFRSHGQKFLIEMKNMIHADFST) are extracellular. Helical transmembrane passes span 125 to 145 (VTVL…QMLI) and 146 to 166 (MTIL…KILW). Residues 167 to 170 (ASDT) lie on the Extracellular side of the membrane. Residues 171–191 (GESMTIHAFGAYFGLAVAGIL) traverse the membrane as a helical segment. The Cytoplasmic segment spans residues 192–210 (YRSGLKEKHSNEESVYHSD). A helical membrane pass occupies residues 211–231 (LFAMIGSLFLWIFWPSFNSAT). Residues 232–241 (ADEAKKQYRA) are Extracellular-facing. A helical transmembrane segment spans residues 242–262 (IVNTYFSLAASVVTAYACSSL). Topologically, residues 263–270 (LESRGKLN) are cytoplasmic. The helical transmembrane segment at 271–288 (MVHIQNATLAGGVAVGTC) threads the bilayer. The Extracellular segment spans residues 289–292 (ADME). The chain crosses the membrane as a helical span at residues 293–313 (IPPYYAMIIGSIAGAVSVFGF). The Cytoplasmic portion of the chain corresponds to 314-331 (KFLTPLFTTKLRIHDTCG). Residues 332 to 352 (VHNLHGLPGVIGGLAGIITVA) form a helical membrane-spanning segment. Residues 353–371 (LEESDSTKTVSQAAALGSS) are Extracellular-facing. The helical transmembrane segment at 372–392 (IATALVGGLITGAILKIPFWA) threads the bilayer. Residues 393–426 (QPPDEDCYDDSVYWEVPERKEYDNHFHELLSTLH) are Cytoplasmic-facing.

The protein belongs to the ammonium transporter (TC 2.A.49) family. Rh subfamily. In terms of assembly, homodimer. Heterotrimer; a RHCE monomer interacts with a RHAG homodimer. Component of the ankyrin-1 complex in the erythrocyte, composed of ANK1, RHCE, RHAG, SLC4A1, EPB42, GYPA, GYPB and AQP1. Interacts with GYPB (via the N-terminal); this interaction bridges the (RHAG)2(RHCE) heterotrimer with the SLC4A1 Band 3 I dimer complexed with GYPA. Post-translationally, glycosylated.

The protein resides in the membrane. It carries out the reaction methylamine(out) = methylamine(in). The catalysed reaction is NH4(+)(in) = NH4(+)(out). It catalyses the reaction CO2(out) = CO2(in). Its function is as follows. Component of the ankyrin-1 complex, a multiprotein complex involved in the stability and shape of the erythrocyte membrane. Heterotrimer with RHCE (RHAG)2(RHCE), that transports ammonium and its related derivative methylammonium, in both neutral and ionic forms, across the erythrocyte membrane. The transport of NH4(+) is electrogenic and masks the NH3 transport. Also, may act as a CO2 channel. Moreover in erythrocyte, regulates RHD membrane expression and is associated with rhesus blood group antigen expression. This Bos taurus (Bovine) protein is Ammonium transporter Rh type A.